Reading from the N-terminus, the 280-residue chain is UBX domain-containing protein 10 (280 aa).

The interval 41-94 is disordered; that stretch reads SAKGRTRPSLQKSQGVEVCAHHIPSPPPAIPYELPSSQKPGACAPKSPNQGASD. Ser87 carries the post-translational modification Phosphoserine. In terms of domain architecture, UBX spans 194–271; it reads DQEPRLLLAV…RIPHKSVLGI (78 aa).

It belongs to the UBXN10 family. As to quaternary structure, interacts with CLUAP1; the interaction is direct and mediates interaction with the intraflagellar transport complex B (IFT-B). Interacts with VCP; the interaction is direct.

The protein localises to the cell projection. It localises to the cilium. VCP/p97-binding protein required for ciliogenesis. Acts as a tethering factor that facilitates recruitment of VCP/p97 to the intraflagellar transport complex B (IFT-B) in cilia. UBX domain-containing proteins act as tethering factors for VCP/p97 and may specify substrate specificity of VCP/p97. In Homo sapiens (Human), this protein is UBX domain-containing protein 10.